Consider the following 888-residue polypeptide: Leucine--tRNA ligase (888 aa).

A 'HIGH' region motif is present at residues 42–52 (PYPSGKLHMGH). Residues 640–644 (TMSKS) carry the 'KMSKS' region motif. Lys-643 contributes to the ATP binding site.

The protein belongs to the class-I aminoacyl-tRNA synthetase family.

Its subcellular location is the cytoplasm. It carries out the reaction tRNA(Leu) + L-leucine + ATP = L-leucyl-tRNA(Leu) + AMP + diphosphate. The polypeptide is Leucine--tRNA ligase (Polaromonas naphthalenivorans (strain CJ2)).